The following is a 157-amino-acid chain: Rieske domain-containing protein (157 aa).

Met-1 is modified (N-acetylmethionine). The residue at position 6 (Ser-6) is a Phosphoserine. 2 consecutive Rieske domains span residues 16–94 (SSVC…TGEG) and 17–131 (SVCV…NIYV). Residues Cys-57, His-59, Cys-80, and His-83 each coordinate [2Fe-2S] cluster.

Requires [2Fe-2S] cluster as cofactor.

The polypeptide is Rieske domain-containing protein (RFESD) (Homo sapiens (Human)).